The primary structure comprises 536 residues: DNA damage-binding protein CMR1 (536 aa).

Residues 36–45 show a composition bias toward basic and acidic residues; sequence REAGVDDTHR. Residues 36 to 72 form a disordered region; sequence REAGVDDTHRTVVKKKKSPSVSRGRSASPKVAPVATR. WD repeat units follow at residues 195–236, 251–291, 346–386, 403–442, 456–495, and 496–535; these read LVYE…LSEN, FFTK…SNDI, LSDK…KKPE, DSRL…LPDD, GRWT…LAHL, and PTAT…KEEE.

Belongs to the WD repeat DDB2/WDR76 family.

In terms of biological role, DNA-binding protein that binds to both single- and double-stranded DNA. Binds preferentially to UV-damaged DNA. May be involved in DNA-metabolic processes. This chain is DNA damage-binding protein CMR1, found in Vanderwaltozyma polyspora (strain ATCC 22028 / DSM 70294 / BCRC 21397 / CBS 2163 / NBRC 10782 / NRRL Y-8283 / UCD 57-17) (Kluyveromyces polysporus).